The chain runs to 316 residues: C-type lectin domain family 10 member A (316 aa).

Residues methionine 1–cysteine 39 lie on the Cytoplasmic side of the membrane. The Endocytosis signal motif lies at tyrosine 5 to phenylalanine 8. The helical; Signal-anchor for type II membrane protein transmembrane segment at histidine 40–phenylalanine 60 threads the bilayer. The Extracellular segment spans residues glutamine 61 to histidine 316. 2 N-linked (GlcNAc...) asparagine glycosylation sites follow: asparagine 78 and asparagine 173. Residues alanine 85–threonine 176 are a coiled coil. 3 cysteine pairs are disulfide-bonded: cysteine 181–cysteine 192, cysteine 209–cysteine 304, and cysteine 282–cysteine 296. Positions histidine 188–glutamate 305 constitute a C-type lectin domain. Valine 218, asparagine 220, glutamate 224, and aspartate 243 together coordinate Ca(2+). Residues glutamine 267 and aspartate 269 each contribute to the a glycoprotein site. Ca(2+) is bound by residues aspartate 269, aspartate 270, glutamate 280, and aspartate 281. Glutamate 280 is an a glycoprotein binding site. Residues histidine 286 and asparagine 292 each coordinate a glycoprotein. Residues asparagine 292, aspartate 293, and glutamate 305 each contribute to the Ca(2+) site.

As to quaternary structure, interacts with A-, B- and C-domain containing PTPRC/CD45 isoforms: isoform 1/CD45ABC, isoform 3/CD45AB, isoform 5/CD45BC and isoform 7/CD45B. Does not interact with PTPRC/CD45 isoform 2/CD45RO, a memory T cell marker. As to expression, expressed in myeloid antigen presenting cells in lymph nodes and skin (at protein level). Expressed in dermal dendritic cells (at protein level).

The protein localises to the cell membrane. Its subcellular location is the early endosome membrane. The protein resides in the lysosome membrane. Its function is as follows. C-type lectin receptor involved in recognition of N-acetylgalactosamine (GalNAc)-terminated glycans by myeloid antigen presenting cells (APCs). Binds in a Ca(2+)-dependent manner to alpha- and beta-linked GalNAc residues on glycoprotein and glycolipid antigens, including alphaGalNAc- and Galbeta1-&gt;3GalNAc-O-Ser/Thr also known as Tn and T antigens, LacdiNAc epitope GalNAcbeta1-&gt;4GlcNAc and its derivative GalNAcbeta1-&gt;4-(Fucalpha1-&gt;3)GlcNAc, O-linked core 5 and 6 glycans, and GM2 and GD2 gangliosides. Acts as a signaling receptor at the interface of APC-T cell interactions. On immature dendritic cells, recognizes Tn antigen-carrying PTPRC/CD45 receptor on effector T cells and downregulates PTRPN/CD45 phosphatase activity with an impact on T cell activation threshold, cytokine production and proliferation. Modulates dendritic cell maturation toward a tolerogenic phenotype leading to generation of regulatory CD4-positive T cell subset with immune suppressive functions. Acts as an endocytic pattern recognition receptor involved in antitumor immunity. During tumorigenesis, recognizes Tn antigens and its sialylated forms Neu5Ac-Tn and Neu5Gc-Tn expressed on tumor cell mucins. On immature dendritic cells, can internalize Tn-terminated immunogens and target them to endolysosomal compartment for MHC class I and II antigen presentation to CD8-positive and CD4-positive T cells, respectively. This is C-type lectin domain family 10 member A from Homo sapiens (Human).